Consider the following 125-residue polypeptide: Oxytocin-neurophysin 1 (125 aa).

The first 19 residues, 1-19, serve as a signal peptide directing secretion; that stretch reads MAGSSLACCLLGLLALTSA. A disulfide bridge connects residues C20 and C25. G28 bears the Glycine amide mark. 7 disulfides stabilise this stretch: C41-C85, C44-C58, C52-C75, C59-C65, C92-C104, C98-C116, and C105-C110.

Belongs to the vasopressin/oxytocin family. As to quaternary structure, interacts with oxytocin receptor (Ki=1.5 nM). Interacts with vasopressin V1aR/AVPR1A (Ki=37 nM), V1bR/AVPR1B (Ki=222 nM), and V2R/AVPR2 receptors (Ki=823 nM).

Its function is as follows. Neurophysin 1 specifically binds oxytocin. In terms of biological role, oxytocin causes contraction of the smooth muscle of the uterus and of the mammary gland. Acts by binding to oxytocin receptor (OXTR). This chain is Oxytocin-neurophysin 1 (OXT), found in Ovis aries (Sheep).